A 230-amino-acid chain; its full sequence is Heptaprenylglyceryl phosphate synthase (230 aa).

Position 12 (Lys12) interacts with sn-glycerol 1-phosphate. Residues Asp14 and Thr40 each contribute to the Mg(2+) site. Residues 159-164 (YIEYSG), Gly189, and 209-210 (GD) each bind sn-glycerol 1-phosphate.

The protein belongs to the GGGP/HepGP synthase family. Group I subfamily. In terms of assembly, homodimer. It depends on Mg(2+) as a cofactor.

It catalyses the reaction sn-glycerol 1-phosphate + all-trans-heptaprenyl diphosphate = 3-heptaprenyl-sn-glycero-1-phosphate + diphosphate. The protein operates within membrane lipid metabolism; glycerophospholipid metabolism. Functionally, prenyltransferase that catalyzes in vivo the transfer of the heptaprenyl moiety of heptaprenyl pyrophosphate (HepPP; 35 carbon atoms) to the C3 hydroxyl of sn-glycerol-1-phosphate (G1P), producing heptaprenylglyceryl phosphate (HepGP). This reaction is an ether-bond-formation step in the biosynthesis of archaea-type G1P-based membrane lipids found in Bacillales. The polypeptide is Heptaprenylglyceryl phosphate synthase (Staphylococcus aureus (strain USA300)).